We begin with the raw amino-acid sequence, 121 residues long: C-X-C motif chemokine 11-6 (121 aa).

An N-terminal signal peptide occupies residues 1-20 (MKTLAAFLLLSCLIAGEVNG). 2 disulfides stabilise this stretch: cysteine 29–cysteine 56 and cysteine 31–cysteine 73. The interval 95–121 (QSVPHSTTTGTVKSSMTSSTSAPTAFK) is disordered. Over residues 100–115 (STTTGTVKSSMTSSTS) the composition is skewed to low complexity.

It belongs to the intercrine alpha (chemokine CxC) family.

Its subcellular location is the secreted. Functionally, ligand for cxcr3.2. Chemotactic for macrophages. This is C-X-C motif chemokine 11-6 from Danio rerio (Zebrafish).